The chain runs to 692 residues: Follicle-stimulating hormone receptor (692 aa).

The N-terminal stretch at 1-17 (MALLLVSLLAFLGSGSG) is a signal peptide. 2 disulfide bridges follow: Cys18/Cys25 and Cys23/Cys32. The region spanning 18 to 46 (CHHWLCHCSNRVFLCQDSKVTEIPPDLPR) is the LRRNT domain. Topologically, residues 18–365 (CHHWLCHCSN…EDIMGYNILR (348 aa)) are extracellular. 9 LRR repeats span residues 49-72 (IELRFVLTKLRVIPKGSFSGFGDL), 73-97 (EKIEISQNDVLEVIEADVFSNLPNL), 98-118 (HEIRIEKANNLLYINPEAFQN), 119-143 (LPSLRYLLISNTGIKHLPAFHKIQS), 144-169 (LQKVLLDIQDNINIHIIARNSFMGLS), 170-192 (FESVILWLNKNGIQEIHNCAFNG), 193-216 (TQLDELNLSDNNNLEELPDDVFQG), 217-240 (ASGPVVLDISRTKVYSLPNHGLEN), and 241-259 (LKKLRARSTYRLKKLPSLD). Asn191 and Asn199 each carry an N-linked (GlcNAc...) asparagine glycan. 4 disulfides stabilise this stretch: Cys275/Cys345, Cys276/Cys292, Cys276/Cys355, and Cys292/Cys337. An N-linked (GlcNAc...) asparagine glycan is attached at Asn293. At Tyr334 the chain carries Sulfotyrosine. The chain crosses the membrane as a helical span at residues 366 to 386 (VLIWFISILAITGNTTVLVVL). Over 387–397 (TTSQYKLTVPR) the chain is Cytoplasmic. Residues 398–420 (FLMCNLAFADLCIGIYLLLIASV) form a helical membrane-spanning segment. Over 421 to 442 (DIHTKSQYHNYAIDWQTGAGCD) the chain is Extracellular. Cys441 and Cys516 form a disulfide bridge. The chain crosses the membrane as a helical span at residues 443-464 (AAGFFTVFASELSVYTLAAITL). The Cytoplasmic portion of the chain corresponds to 465-484 (ERWHTITHAMQLECKVQLCH). The chain crosses the membrane as a helical span at residues 485-507 (AASIMVLGWAFAFAAALFPIFGI). At 508 to 527 (SSYMKVSICLPMDIDSPLSQ) the chain is on the extracellular side. Residues 528-549 (LYVMALLVLNALAFVVICGCYT) form a helical membrane-spanning segment. Over 550–572 (HIYLTVRNPNIVSSSRDTKIAKR) the chain is Cytoplasmic. The helical transmembrane segment at 573–596 (MATLIFTDFLCMAPILFFAISASL) threads the bilayer. The Extracellular segment spans residues 597-607 (KVPLITVSKAK). A helical membrane pass occupies residues 608–629 (ILLVLFYPINSCANPFLYAIFT). Residues 630-692 (KNFRRDFFVL…LVPLNHSVQN (63 aa)) are Cytoplasmic-facing.

It belongs to the G-protein coupled receptor 1 family. FSH/LSH/TSH subfamily. As to quaternary structure, homotrimer. Functions as a homotrimer binding the FSH hormone heterodimer composed of CGA and FSHB. Interacts with ARRB2. Interacts with APPL2; interaction is independent of follicle stimulating hormone stimulation. Post-translationally, N-glycosylated; indirectly required for FSH-binding, possibly via a conformational change that allows high affinity binding of hormone. In terms of processing, sulfated.

It localises to the cell membrane. Functionally, g protein-coupled receptor for follitropin, the follicle-stimulating hormone. Through cAMP production activates the downstream PI3K-AKT and ERK1/ERK2 signaling pathways. The protein is Follicle-stimulating hormone receptor (Fshr) of Mus musculus (Mouse).